Reading from the N-terminus, the 346-residue chain is Sensor histidine kinase GraS (346 aa).

Helical transmembrane passes span 15 to 35 and 43 to 63; these read INWI…AYID and VFYI…FTFV. Residues 126-332 form the Histidine kinase domain; it reads EFVHDIKTPV…TFYFIFPQQN (207 aa). The residue at position 129 (H129) is a Phosphohistidine; by autocatalysis.

Autophosphorylated.

It is found in the cell membrane. The catalysed reaction is ATP + protein L-histidine = ADP + protein N-phospho-L-histidine.. Its function is as follows. Member of the two-component regulatory system GraR/GraS involved in resistance against cationic antimicrobial peptides (CAMPs). GraS probably functions as a sensor protein kinase which is autophosphorylated at a histidine residue and transfers its phosphate group to GraR. This chain is Sensor histidine kinase GraS (graS), found in Staphylococcus epidermidis (strain ATCC 35984 / DSM 28319 / BCRC 17069 / CCUG 31568 / BM 3577 / RP62A).